Here is a 134-residue protein sequence, read N- to C-terminus: Photosystem II lipoprotein Psb27 (134 aa).

Positions 1-24 (MSFLKNQLSRLLALILVVAIGLTA) are cleaved as a signal peptide. A lipid anchor (N-palmitoyl cysteine) is attached at C25. A lipid anchor (S-diacylglycerol cysteine) is attached at C25.

The protein belongs to the Psb27 family. As to quaternary structure, monomer. Forms a complex with a monomeric, partially assembled PSII. This is probably the complex in which D1 is assembled and/or replaced. Present in 6-10% of PSII complexes; mostly in monomeric PSII. These PSII do not evolve oxygen, do not have an assembled calcium-manganese-oxide cluster. Psb27-containing PSII seem to be assembly intermediates; a wild-type strain includes the intrinsic membrane proteins, Psb27, Pbs28, substoichiometric amounts of PsbO and PsbQ but no PsbU or PsbV, while a ctpA deletion mutant includes the intrinsic membrane proteins (D1 as precursor), Psb27, a very low amount of PsbO and PsbQ, but no PsbU or PsbV. Small amounts of Psb27 interact with the lumenal domain of CP43 (psbC) in wild-type and a ctpA mutant. A small amount can also be detected in monomeric and trimeric photosystem I (PSI), possibly via association with PsaB.

It localises to the cellular thylakoid membrane. Functionally, plays a role in the repair and/or biogenesis of the calcium-manganese-oxide cluster on the lumenal face of the thylakoid membrane. Photosystem II (PSII) complexes containing this protein are monomeric, are assembly intermediates lacking the calcium-manganese-oxide cluster and miss some of the lumenal subunits. Probably blocks binding of some of the small lumenal subunits. The protein is Photosystem II lipoprotein Psb27 of Synechocystis sp. (strain ATCC 27184 / PCC 6803 / Kazusa).